Here is a 478-residue protein sequence, read N- to C-terminus: MLPPGRNGTAHRARLGLQRQLAQVDAPGGSAAPLGPAQVVTAGLLTLLIVWTLLGNVLVCAAIVRSRHLRAKMTNIFIVSLAVSDLFVALLVMPWKAVAEVAGYWPFGAFCDIWVAFDIMCSTASILNLCIISVDRYWAISRPFRYERKMTQRVALVMVALAWTLSILISFIPVQLNWHRDKAGSQGREGLLSNETPWEEGWELDGRTENCDSSLNRTYAISSSLISFYIPVAIMIVTYTRIYRIAQVQIRRISSLERAAEHAQSCRSRGACEPDPSLRASIKKETKVFKTLSVIMGVFVCCWLPFFILNCMVPFCSSGDAQGPRTGFPCVSETTFDIFVWFGWANSSLNPIIYAFNADFRKVFAQLLGCSHLCFRTPVQTVNISNELISYNQDTVFHREIAAAYVHMIPNAVSSGDREVGEEEEAEEEGPFDHMSQISPTTPDGDLAAESVWELDCEEEVSLGKISPLTPNCFHKTA.

Topologically, residues Met-1–Gln-38 are extracellular. N-linked (GlcNAc...) asparagine glycosylation occurs at Asn-7. Residues Val-39–Val-64 form a helical membrane-spanning segment. At Arg-65 to Asn-75 the chain is on the cytoplasmic side. A helical transmembrane segment spans residues Ile-76–Ala-102. Residues Gly-103–Cys-111 lie on the Extracellular side of the membrane. Cys-111 and Cys-211 are joined by a disulfide. The helical transmembrane segment at Asp-112 to Val-134 threads the bilayer. The Cytoplasmic portion of the chain corresponds to Asp-135 to Arg-153. Residues Val-154–His-179 form a helical membrane-spanning segment. At Arg-180–Leu-215 the chain is on the extracellular side. A helical transmembrane segment spans residues Asn-216–Thr-240. Residues Arg-241–Phe-289 are Cytoplasmic-facing. The chain crosses the membrane as a helical span at residues Lys-290–Ser-317. Topologically, residues Ser-318–Thr-335 are extracellular. A helical membrane pass occupies residues Phe-336–Asn-357. Topologically, residues Ala-358–Ala-478 are cytoplasmic. A lipid anchor (S-palmitoyl cysteine) is attached at Cys-370. The interval Gly-416–Asp-446 is disordered. The segment covering Val-420–Gly-430 has biased composition (acidic residues).

It belongs to the G-protein coupled receptor 1 family.

It is found in the cell membrane. In terms of biological role, dopamine receptor whose activity is mediated by G proteins which activate adenylyl cyclase. The protein is D(1B) dopamine receptor (Drd5) of Mus musculus (Mouse).